A 256-amino-acid polypeptide reads, in one-letter code: 5'-nucleotidase SurE (256 aa).

Positions 8, 9, 40, and 92 each coordinate a divalent metal cation.

It belongs to the SurE nucleotidase family. Requires a divalent metal cation as cofactor.

It localises to the cytoplasm. It catalyses the reaction a ribonucleoside 5'-phosphate + H2O = a ribonucleoside + phosphate. Functionally, nucleotidase that shows phosphatase activity on nucleoside 5'-monophosphates. The protein is 5'-nucleotidase SurE of Sinorhizobium fredii (strain NBRC 101917 / NGR234).